Here is a 293-residue protein sequence, read N- to C-terminus: Formamidopyrimidine-DNA glycosylase (293 aa).

Proline 2 acts as the Schiff-base intermediate with DNA in catalysis. Glutamate 3 functions as the Proton donor in the catalytic mechanism. Lysine 58 acts as the Proton donor; for beta-elimination activity in catalysis. 3 residues coordinate DNA: histidine 104, arginine 127, and arginine 170. An FPG-type zinc finger spans residues 257–293 (SVYGREGKPCRNPACGGTVERVVQSGRSTFFCASCQT). The Proton donor; for delta-elimination activity role is filled by arginine 283.

The protein belongs to the FPG family. Monomer. It depends on Zn(2+) as a cofactor.

The catalysed reaction is Hydrolysis of DNA containing ring-opened 7-methylguanine residues, releasing 2,6-diamino-4-hydroxy-5-(N-methyl)formamidopyrimidine.. It carries out the reaction 2'-deoxyribonucleotide-(2'-deoxyribose 5'-phosphate)-2'-deoxyribonucleotide-DNA = a 3'-end 2'-deoxyribonucleotide-(2,3-dehydro-2,3-deoxyribose 5'-phosphate)-DNA + a 5'-end 5'-phospho-2'-deoxyribonucleoside-DNA + H(+). Its function is as follows. Involved in base excision repair of DNA damaged by oxidation or by mutagenic agents. Acts as a DNA glycosylase that recognizes and removes damaged bases. Has a preference for oxidized purines, such as 7,8-dihydro-8-oxoguanine (8-oxoG). Has AP (apurinic/apyrimidinic) lyase activity and introduces nicks in the DNA strand. Cleaves the DNA backbone by beta-delta elimination to generate a single-strand break at the site of the removed base with both 3'- and 5'-phosphates. In Brucella canis (strain ATCC 23365 / NCTC 10854 / RM-666), this protein is Formamidopyrimidine-DNA glycosylase.